Here is an 884-residue protein sequence, read N- to C-terminus: E3 ubiquitin-protein ligase BRE1-like 1 (884 aa).

The segment at 1–37 (MGSTGEPDRKRRLSSSVAPGGGAPVSPAKRLAVAPTS) is disordered. The stretch at 49–86 (YKNQKLSEQLEAHKFEYRALENKFAGLKEKQRTHNETL) forms a coiled coil. Residues 107–127 (KSGSPNSSPGSGHNNVQKDGT) form a disordered region. Over residues 108-121 (SGSPNSSPGSGHNN) the composition is skewed to low complexity. Coiled-coil stretches lie at residues 216-541 (LNNV…ELKL), 580-663 (SKLE…LQQI), 696-762 (RNLQ…QSLD), and 789-827 (KKRI…KEYR). The segment at 832 to 871 (CGICHDRQKEVVITKCYHLFCNQCIQKSLGNRQRRCPSCS) adopts an RING-type zinc-finger fold.

Belongs to the BRE1 family. In terms of assembly, interacts with SKIPA. Interacts with HUB2.

It localises to the nucleus. The catalysed reaction is S-ubiquitinyl-[E2 ubiquitin-conjugating enzyme]-L-cysteine + [acceptor protein]-L-lysine = [E2 ubiquitin-conjugating enzyme]-L-cysteine + N(6)-ubiquitinyl-[acceptor protein]-L-lysine.. It participates in protein modification; protein ubiquitination. Its function is as follows. E3 ubiquitin-protein ligase that monoubiquitinates H2B to form H2BK143ub1. H2BK143ub1 gives a specific tag for epigenetic transcriptional activation and is a prerequisite for H3 Lys-4 methylation (H3K4me). It thereby plays a central role in histone code and gene regulation. H2B monoubiquitination (H2BK143ub1), mediated by HUB1, modulates transcriptional regulation of anther development, likely by promoting histone H3K4 dimethylation (H3K4me2) in the chromatin of the key tapetum degradation-related genes C4, CP1 and UDT1. This Oryza sativa subsp. japonica (Rice) protein is E3 ubiquitin-protein ligase BRE1-like 1.